The sequence spans 503 residues: AMP phosphorylase (503 aa).

Residues Gly-168, 194 to 199 (SRAITS), and Thr-203 each bind AMP. Asp-256 functions as the Proton donor in the catalytic mechanism. AMP is bound by residues Ser-264 and Lys-288.

It belongs to the thymidine/pyrimidine-nucleoside phosphorylase family. Type 2 subfamily.

The catalysed reaction is AMP + phosphate = alpha-D-ribose 1,5-bisphosphate + adenine. It carries out the reaction CMP + phosphate = cytosine + alpha-D-ribose 1,5-bisphosphate. It catalyses the reaction UMP + phosphate = alpha-D-ribose 1,5-bisphosphate + uracil. In terms of biological role, catalyzes the conversion of AMP and phosphate to adenine and ribose 1,5-bisphosphate (R15P). Exhibits phosphorylase activity toward CMP and UMP in addition to AMP. Functions in an archaeal AMP degradation pathway, together with R15P isomerase and RubisCO. This is AMP phosphorylase from Pyrococcus horikoshii (strain ATCC 700860 / DSM 12428 / JCM 9974 / NBRC 100139 / OT-3).